Reading from the N-terminus, the 373-residue chain is Probable tRNA sulfurtransferase (373 aa).

The THUMP domain occupies 54–158; sequence NKNIEELSKV…NDVAYFYHKI (105 aa). Residues 176 to 177, 201 to 202, Lys-256, Gly-278, and Gln-287 contribute to the ATP site; these read LF and NF.

Belongs to the ThiI family.

It is found in the cytoplasm. It carries out the reaction [ThiI sulfur-carrier protein]-S-sulfanyl-L-cysteine + a uridine in tRNA + 2 reduced [2Fe-2S]-[ferredoxin] + ATP + H(+) = [ThiI sulfur-carrier protein]-L-cysteine + a 4-thiouridine in tRNA + 2 oxidized [2Fe-2S]-[ferredoxin] + AMP + diphosphate. It catalyses the reaction [ThiS sulfur-carrier protein]-C-terminal Gly-Gly-AMP + S-sulfanyl-L-cysteinyl-[cysteine desulfurase] + AH2 = [ThiS sulfur-carrier protein]-C-terminal-Gly-aminoethanethioate + L-cysteinyl-[cysteine desulfurase] + A + AMP + 2 H(+). It participates in cofactor biosynthesis; thiamine diphosphate biosynthesis. In terms of biological role, catalyzes the ATP-dependent transfer of a sulfur to tRNA to produce 4-thiouridine in position 8 of tRNAs, which functions as a near-UV photosensor. Also catalyzes the transfer of sulfur to the sulfur carrier protein ThiS, forming ThiS-thiocarboxylate. This is a step in the synthesis of thiazole, in the thiamine biosynthesis pathway. The sulfur is donated as persulfide by IscS. The protein is Probable tRNA sulfurtransferase of Saccharolobus islandicus (strain M.16.27) (Sulfolobus islandicus).